Reading from the N-terminus, the 445-residue chain is Tubulin beta chain (445 aa).

GTP contacts are provided by glutamine 11, glutamate 69, serine 138, glycine 142, threonine 143, glycine 144, asparagine 204, and asparagine 226. Residue glutamate 69 coordinates Mg(2+).

The protein belongs to the tubulin family. Dimer of alpha and beta chains. A typical microtubule is a hollow water-filled tube with an outer diameter of 25 nm and an inner diameter of 15 nM. Alpha-beta heterodimers associate head-to-tail to form protofilaments running lengthwise along the microtubule wall with the beta-tubulin subunit facing the microtubule plus end conferring a structural polarity. Microtubules usually have 13 protofilaments but different protofilament numbers can be found in some organisms and specialized cells. Mg(2+) serves as cofactor.

It localises to the cytoplasm. The protein resides in the cytoskeleton. Functionally, tubulin is the major constituent of microtubules, a cylinder consisting of laterally associated linear protofilaments composed of alpha- and beta-tubulin heterodimers. Microtubules grow by the addition of GTP-tubulin dimers to the microtubule end, where a stabilizing cap forms. Below the cap, tubulin dimers are in GDP-bound state, owing to GTPase activity of alpha-tubulin. In Schizophyllum commune (Split gill fungus), this protein is Tubulin beta chain (TUB-2).